We begin with the raw amino-acid sequence, 466 residues long: Asparagine--tRNA ligase (466 aa).

Belongs to the class-II aminoacyl-tRNA synthetase family. As to quaternary structure, homodimer.

It localises to the cytoplasm. The enzyme catalyses tRNA(Asn) + L-asparagine + ATP = L-asparaginyl-tRNA(Asn) + AMP + diphosphate + H(+). The sequence is that of Asparagine--tRNA ligase from Shewanella baltica (strain OS185).